We begin with the raw amino-acid sequence, 557 residues long: Alpha-barbatene synthase (557 aa).

Residues Arg273, Asp310, Asp314, Arg451, and Asp454 each contribute to the (2E,6E)-farnesyl diphosphate site. Mg(2+)-binding residues include Asp310 and Asp314. Positions 310 to 314 match the DDXXD motif motif; it reads DDACD. 3 residues coordinate Mg(2+): Asp454, Asp455, and Asp462.

This sequence belongs to the terpene synthase family. Tpsa subfamily. In terms of assembly, monomer. The cofactor is Mg(2+). Mn(2+) serves as cofactor. In terms of tissue distribution, expressed exclusively in flowers. Expressed in intrafloral nectaries and in the funiculus within the ovules.

It localises to the cytoplasm. It carries out the reaction (2E,6E)-farnesyl diphosphate = (+)-alpha-barbatene + diphosphate. The enzyme catalyses (2E,6E)-farnesyl diphosphate = (+)-thujopsene + diphosphate. The catalysed reaction is (2E,6E)-farnesyl diphosphate = (+)-beta-chamigrene + diphosphate. It catalyses the reaction (2E,6E)-farnesyl diphosphate = (+)-beta-barbatene + diphosphate. It carries out the reaction (2E,6E)-farnesyl diphosphate = beta-sesquiphellandrene + diphosphate. The enzyme catalyses (2E,6E)-farnesyl diphosphate = (S)-beta-bisabolene + diphosphate. The catalysed reaction is (2E,6E)-farnesyl diphosphate = (-)-alpha-cuprenene + diphosphate. It catalyses the reaction (2E,6E)-farnesyl diphosphate = alpha-zingiberene + diphosphate. It carries out the reaction (2E,6E)-farnesyl diphosphate = beta-acoradiene + diphosphate. The enzyme catalyses (2E,6E)-farnesyl diphosphate = (E)-beta-farnesene + diphosphate. It functions in the pathway secondary metabolite biosynthesis; terpenoid biosynthesis. Functionally, involved in the biosynthesis of over 15 sesquiterpenes (C15). The major products are (+)-alpha-barbatene (27.3%), (+)-thujopsene (17.8%) and (+)-beta-chamigrene (9.9%). Can use farnesyl diphosphate or geranyl diphosphate as substrates, but not geranylgeranyl diphosphate. This is Alpha-barbatene synthase from Arabidopsis thaliana (Mouse-ear cress).